Here is a 376-residue protein sequence, read N- to C-terminus: Carbamoyl phosphate synthase small chain (376 aa).

The interval 1–183 (MENILLNKAL…IYKKKYIEKN (183 aa)) is CPSase. The L-glutamine site is built by S51, G235, and G237. The 188-residue stretch at 187-374 (NIVAYDFGIK…INLVKDYRLN (188 aa)) folds into the Glutamine amidotransferase type-1 domain. Residue C263 is the Nucleophile of the active site. L-glutamine is bound by residues L264, Q267, N305, and F308. Active-site residues include H347 and E349.

It belongs to the CarA family. As to quaternary structure, composed of two chains; the small (or glutamine) chain promotes the hydrolysis of glutamine to ammonia, which is used by the large (or ammonia) chain to synthesize carbamoyl phosphate. Tetramer of heterodimers (alpha,beta)4.

The catalysed reaction is hydrogencarbonate + L-glutamine + 2 ATP + H2O = carbamoyl phosphate + L-glutamate + 2 ADP + phosphate + 2 H(+). The enzyme catalyses L-glutamine + H2O = L-glutamate + NH4(+). Its pathway is amino-acid biosynthesis; L-arginine biosynthesis; carbamoyl phosphate from bicarbonate: step 1/1. The protein operates within pyrimidine metabolism; UMP biosynthesis via de novo pathway; (S)-dihydroorotate from bicarbonate: step 1/3. In terms of biological role, small subunit of the glutamine-dependent carbamoyl phosphate synthetase (CPSase). CPSase catalyzes the formation of carbamoyl phosphate from the ammonia moiety of glutamine, carbonate, and phosphate donated by ATP, constituting the first step of 2 biosynthetic pathways, one leading to arginine and/or urea and the other to pyrimidine nucleotides. The small subunit (glutamine amidotransferase) binds and cleaves glutamine to supply the large subunit with the substrate ammonia. This Wigglesworthia glossinidia brevipalpis protein is Carbamoyl phosphate synthase small chain.